A 265-amino-acid chain; its full sequence is MNAPIGVIDSGVGGLTVAKEIIKRLPNETIYYIGDTARCPYGPRSRQEVRNFTWQMAKALEKMNIKMLVIACNTATAVALESLQRNMPFPVLGVINAGARAAVKKTKRHEVVVLATEGTIKSGAYEEALLSLNTSTHIIPLACPTFVPLVESGEYKGEFATKLIAEGLKPLKNQQFDTVILGCTHYPILQKQIEAVVGEEVNVLSSAEETAKDAQEMLAYNGTLANANTVPAHKFFATGSVPIFRSIAENWLEQGTLDIRRITLK.

Residues 9-10 (DS) and 41-42 (YG) each bind substrate. Cys72 serves as the catalytic Proton donor/acceptor. A substrate-binding site is contributed by 73 to 74 (NT). Cys183 acts as the Proton donor/acceptor in catalysis. Substrate is bound at residue 184 to 185 (TH).

This sequence belongs to the aspartate/glutamate racemases family.

It catalyses the reaction L-glutamate = D-glutamate. Its pathway is cell wall biogenesis; peptidoglycan biosynthesis. Functionally, provides the (R)-glutamate required for cell wall biosynthesis. The sequence is that of Glutamate racemase from Lysinibacillus sphaericus (strain C3-41).